We begin with the raw amino-acid sequence, 762 residues long: 5-methyltetrahydropteroyltriglutamate--homocysteine methyltransferase (762 aa).

5-methyltetrahydropteroyltri-L-glutamate-binding positions include 17–20 (REWK) and Lys-111. L-homocysteine is bound by residues 435–437 (IGS) and Glu-488. Residues 435–437 (IGS) and Glu-488 contribute to the L-methionine site. Residues 519–520 (RC) and Trp-565 each bind 5-methyltetrahydropteroyltri-L-glutamate. Asp-603 contributes to the L-homocysteine binding site. Asp-603 lines the L-methionine pocket. Position 609 (Glu-609) interacts with 5-methyltetrahydropteroyltri-L-glutamate. Residues His-645, Cys-647, and Glu-669 each contribute to the Zn(2+) site. Catalysis depends on His-698, which acts as the Proton donor. Cys-730 contributes to the Zn(2+) binding site.

This sequence belongs to the vitamin-B12 independent methionine synthase family. It depends on Zn(2+) as a cofactor.

It carries out the reaction 5-methyltetrahydropteroyltri-L-glutamate + L-homocysteine = tetrahydropteroyltri-L-glutamate + L-methionine. It functions in the pathway amino-acid biosynthesis; L-methionine biosynthesis via de novo pathway; L-methionine from L-homocysteine (MetE route): step 1/1. Its function is as follows. Catalyzes the transfer of a methyl group from 5-methyltetrahydrofolate to homocysteine resulting in methionine formation. This is 5-methyltetrahydropteroyltriglutamate--homocysteine methyltransferase from Bacillus anthracis (strain A0248).